Here is a 214-residue protein sequence, read N- to C-terminus: Cytochrome b (214 aa).

The next 4 membrane-spanning stretches (helical) occupy residues 31-51 (FGSM…FLAF), 75-96 (WIMQ…YIHI), 111-131 (WVSG…GYVL), and 176-196 (FFAL…IHIL). Residues His81 and His95 each coordinate heme b. The heme b site is built by His180 and His194. His199 contributes to the a ubiquinone binding site.

This sequence belongs to the cytochrome b family. In terms of assembly, the cytochrome bc1 complex contains 3 respiratory subunits (MT-CYB, CYC1 and UQCRFS1), 2 core proteins (UQCRC1 and UQCRC2) and probably 6 low-molecular weight proteins. It depends on heme b as a cofactor.

It is found in the mitochondrion inner membrane. In terms of biological role, component of the ubiquinol-cytochrome c reductase complex (complex III or cytochrome b-c1 complex) that is part of the mitochondrial respiratory chain. The b-c1 complex mediates electron transfer from ubiquinol to cytochrome c. Contributes to the generation of a proton gradient across the mitochondrial membrane that is then used for ATP synthesis. The chain is Cytochrome b (MT-CYB) from Gloydius blomhoffii (Mamushi).